The primary structure comprises 608 residues: Probable methyltransferase PMT3 (608 aa).

At Met-1 to Arg-12 the chain is on the cytoplasmic side. A helical; Signal-anchor for type II membrane protein membrane pass occupies residues Val-13–Ser-33. Over Ser-34–Glu-608 the chain is Lumenal. Asn-342 is a glycosylation site (N-linked (GlcNAc...) asparagine).

Belongs to the methyltransferase superfamily.

It localises to the golgi apparatus membrane. This chain is Probable methyltransferase PMT3, found in Arabidopsis thaliana (Mouse-ear cress).